We begin with the raw amino-acid sequence, 427 residues long: Glutamate-1-semialdehyde 2,1-aminomutase (427 aa).

An N6-(pyridoxal phosphate)lysine modification is found at Lys265.

This sequence belongs to the class-III pyridoxal-phosphate-dependent aminotransferase family. HemL subfamily. As to quaternary structure, homodimer. Pyridoxal 5'-phosphate is required as a cofactor.

The protein localises to the cytoplasm. It catalyses the reaction (S)-4-amino-5-oxopentanoate = 5-aminolevulinate. It functions in the pathway porphyrin-containing compound metabolism; protoporphyrin-IX biosynthesis; 5-aminolevulinate from L-glutamyl-tRNA(Glu): step 2/2. This is Glutamate-1-semialdehyde 2,1-aminomutase from Burkholderia ambifaria (strain ATCC BAA-244 / DSM 16087 / CCUG 44356 / LMG 19182 / AMMD) (Burkholderia cepacia (strain AMMD)).